A 372-amino-acid chain; its full sequence is MYYLCIFLWVTSVACQTSKEIYQLLSKSHTNQNLVVSPVSIETILSMVFMGAEGSTAKELQSALGLPSEDKEAVAARYGALLNDLQGQEEGPILKLANRIYVNDQYSLNQNYNLAVREPFKSEAESISLTNGPVAAERINQWVLDQTSGKIKGMIDPGSMTSDVKALLVNAIYFKGQWESKFDPAKTRASTFQVTANKSVPVQMMAQMGTFRANYFRDLDAQVIELPYLNSNLSMTIFLPREVEGLSALEEKIVGFARPLVAKEVYLKLPKFKIEFRDELKETLEKLGIRELFTDKSDLSGLFADKSGGKVSQVSHKAFLEVNEEGAEAAGATSVAVTNRAGFSTFLMADHPFAFVIRDANTIYFQGRVVSP.

The N-terminal stretch at Met1–Cys15 is a signal peptide. 2 N-linked (GlcNAc...) asparagine glycosylation sites follow: Asn197 and Asn232.

Belongs to the serpin family. Expressed in the ovary.

It is found in the secreted. Functionally, serine protease inhibitor with activity toward trypsin. Involved in innate immunity to fungal infection by negatively regulating the Toll signaling pathway and suppressing the expression of the antifungal peptide drosomycin. Acts upstream of SPE and grass, and downstream of the fungal cell wall pattern recognition receptor GNBP3. May function specifically in the GNBP3-dependent beta-1,3-glucan branch of the Toll pathway. In Drosophila melanogaster (Fruit fly), this protein is Serine protease inhibitor 42Dd.